Reading from the N-terminus, the 253-residue chain is uncharacterized protein (253 aa).

Transmembrane regions (helical) follow at residues 17–37 (MWLLVWICGIIFLLGTGHIIA), 46–66 (IFGFFVAVAFFLLFLSPVFVF), 93–113 (LAASLLYQFVIQLALTAYGIW), 139–159 (MYGLISSLDMSVTVIVFWTVF), 172–192 (AMVLLVAMWLFFDEYIISPLV), and 222–242 (IHLSVLGFPIAIVITFLLLIM).

Its subcellular location is the cell membrane. This is an uncharacterized protein from Bacillus subtilis (strain 168).